The primary structure comprises 20 residues: Beta-1,3-glucan-binding protein 2 (20 aa).

The protein belongs to the insect beta-1,3-glucan binding protein family. As to quaternary structure, monomer.

Its subcellular location is the secreted. Functionally, involved in the recognition of invading microorganisms causing their aggregation. Activates the phenoloxidase cascade. Binds specifically to beta-1,3-glucan. Binds the A.niger cell wall component alpha-1,3-glucan, a fungal pathogen-associated molecular pattern (PAMP) that activates the host immune response. In Galleria mellonella (Greater wax moth), this protein is Beta-1,3-glucan-binding protein 2.